The primary structure comprises 428 residues: Light-independent protochlorophyllide reductase subunit N (428 aa).

3 residues coordinate [4Fe-4S] cluster: cysteine 29, cysteine 54, and cysteine 115.

Belongs to the BchN/ChlN family. In terms of assembly, protochlorophyllide reductase is composed of three subunits; BchL, BchN and BchB. Forms a heterotetramer of two BchB and two BchN subunits. [4Fe-4S] cluster serves as cofactor.

The catalysed reaction is chlorophyllide a + oxidized 2[4Fe-4S]-[ferredoxin] + 2 ADP + 2 phosphate = protochlorophyllide a + reduced 2[4Fe-4S]-[ferredoxin] + 2 ATP + 2 H2O. It participates in porphyrin-containing compound metabolism; bacteriochlorophyll biosynthesis (light-independent). Component of the dark-operative protochlorophyllide reductase (DPOR) that uses Mg-ATP and reduced ferredoxin to reduce ring D of protochlorophyllide (Pchlide) to form chlorophyllide a (Chlide). This reaction is light-independent. The NB-protein (BchN-BchB) is the catalytic component of the complex. This chain is Light-independent protochlorophyllide reductase subunit N, found in Cereibacter sphaeroides (strain ATCC 17023 / DSM 158 / JCM 6121 / CCUG 31486 / LMG 2827 / NBRC 12203 / NCIMB 8253 / ATH 2.4.1.) (Rhodobacter sphaeroides).